Consider the following 273-residue polypeptide: Nitrogenase iron protein (273 aa).

Residue 8 to 15 participates in ATP binding; sequence GKGGIGKS. Cys-95 is a [4Fe-4S] cluster binding site. An ADP-ribosylarginine; by dinitrogenase reductase ADP-ribosyltransferase modification is found at Arg-98. Cys-130 lines the [4Fe-4S] cluster pocket.

Belongs to the NifH/BchL/ChlL family. As to quaternary structure, homodimer. It depends on [4Fe-4S] cluster as a cofactor. In terms of processing, the reversible ADP-ribosylation of Arg-98 inactivates the nitrogenase reductase and regulates nitrogenase activity.

The catalysed reaction is N2 + 8 reduced [2Fe-2S]-[ferredoxin] + 16 ATP + 16 H2O = H2 + 8 oxidized [2Fe-2S]-[ferredoxin] + 2 NH4(+) + 16 ADP + 16 phosphate + 6 H(+). Functionally, the key enzymatic reactions in nitrogen fixation are catalyzed by the nitrogenase complex, which has 2 components: the iron protein and the molybdenum-iron protein. The protein is Nitrogenase iron protein of Methanosarcina mazei (strain ATCC BAA-159 / DSM 3647 / Goe1 / Go1 / JCM 11833 / OCM 88) (Methanosarcina frisia).